The sequence spans 465 residues: MKDVVLVKSLYRNTSEYSDKKVKISGWIRTLRASNAFGFIEVNDGSFFKNVQVVFDSAKISNYKEISKLPISSSISVIGTLVETPDSKQPFEIQAEEIIVEGMSDSDYPLQKKRHTFEYLRTIAHLRPRSNAFSATFRVRSVAAYAIHKFFQDQGFVYTHTPILTGSDCEGAGEMFRVTTLDMMAPPIAEEGGIDFSQDFFGKETNLTVSGQLNAECFALAFRNIYTFGPTFRAENSNTVKHAAEFWMIEPEMAFADLIDDMEVAENMLKYVIKYVMDECPEEIAFFNQFVDKGLLERLNHVVNSEFGKVTYTEAVKLLQESGKEFEYPVEWGIDLQTEHERYLTEQIFKKPVFVTDYPKDIKAFYMRLNEDGKTVAAMDCLVPGIGEIIGGSQREERLDVLKARMAELNLNEEDYWWYLELRKYGETVHSGFGLGFERLIMYITGMANIRDVIPFPRTTGTAEF.

It belongs to the class-II aminoacyl-tRNA synthetase family. As to quaternary structure, homodimer.

It is found in the cytoplasm. It catalyses the reaction tRNA(Asn) + L-asparagine + ATP = L-asparaginyl-tRNA(Asn) + AMP + diphosphate + H(+). The chain is Asparagine--tRNA ligase from Clostridium perfringens (strain ATCC 13124 / DSM 756 / JCM 1290 / NCIMB 6125 / NCTC 8237 / Type A).